We begin with the raw amino-acid sequence, 333 residues long: Glyceraldehyde-3-phosphate dehydrogenase (333 aa).

NAD(+) contacts are provided by residues 11-12 (RI), Asp35, Met79, and Ser121. Residues 150 to 152 (SCT), Thr181, 210 to 211 (TG), and Arg233 each bind D-glyceraldehyde 3-phosphate. Cys151 functions as the Nucleophile in the catalytic mechanism. Asn315 serves as a coordination point for NAD(+).

It belongs to the glyceraldehyde-3-phosphate dehydrogenase family. As to quaternary structure, homotetramer.

The protein localises to the cytoplasm. It carries out the reaction D-glyceraldehyde 3-phosphate + phosphate + NAD(+) = (2R)-3-phospho-glyceroyl phosphate + NADH + H(+). It functions in the pathway carbohydrate degradation; glycolysis; pyruvate from D-glyceraldehyde 3-phosphate: step 1/5. In terms of biological role, catalyzes the oxidative phosphorylation of glyceraldehyde 3-phosphate (G3P) to 1,3-bisphosphoglycerate (BPG) using the cofactor NAD. The first reaction step involves the formation of a hemiacetal intermediate between G3P and a cysteine residue, and this hemiacetal intermediate is then oxidized to a thioester, with concomitant reduction of NAD to NADH. The reduced NADH is then exchanged with the second NAD, and the thioester is attacked by a nucleophilic inorganic phosphate to produce BPG. This is Glyceraldehyde-3-phosphate dehydrogenase (gap) from Bacteroides fragilis (strain YCH46).